The sequence spans 157 residues: Peptide methionine sulfoxide reductase MsrA (157 aa).

Residue Cys-10 is part of the active site.

This sequence belongs to the MsrA Met sulfoxide reductase family.

The enzyme catalyses L-methionyl-[protein] + [thioredoxin]-disulfide + H2O = L-methionyl-(S)-S-oxide-[protein] + [thioredoxin]-dithiol. The catalysed reaction is [thioredoxin]-disulfide + L-methionine + H2O = L-methionine (S)-S-oxide + [thioredoxin]-dithiol. Its function is as follows. Has an important function as a repair enzyme for proteins that have been inactivated by oxidation. Catalyzes the reversible oxidation-reduction of methionine sulfoxide in proteins to methionine. The chain is Peptide methionine sulfoxide reductase MsrA from Clostridium perfringens (strain 13 / Type A).